Reading from the N-terminus, the 424-residue chain is Histidine--tRNA ligase (424 aa).

The protein belongs to the class-II aminoacyl-tRNA synthetase family. In terms of assembly, homodimer.

It is found in the cytoplasm. The catalysed reaction is tRNA(His) + L-histidine + ATP = L-histidyl-tRNA(His) + AMP + diphosphate + H(+). The sequence is that of Histidine--tRNA ligase from Escherichia coli O17:K52:H18 (strain UMN026 / ExPEC).